A 268-amino-acid polypeptide reads, in one-letter code: Glucosamine-6-phosphate deaminase (268 aa).

Catalysis depends on Asp72, which acts as the Proton acceptor; for enolization step. Asp141 acts as the For ring-opening step in catalysis. His143 serves as the catalytic Proton acceptor; for ring-opening step. Residue Glu148 is the For ring-opening step of the active site.

It belongs to the glucosamine/galactosamine-6-phosphate isomerase family. NagB subfamily.

It carries out the reaction alpha-D-glucosamine 6-phosphate + H2O = beta-D-fructose 6-phosphate + NH4(+). The protein operates within amino-sugar metabolism; N-acetylneuraminate degradation; D-fructose 6-phosphate from N-acetylneuraminate: step 5/5. Allosterically activated by N-acetylglucosamine 6-phosphate (GlcNAc6P). In terms of biological role, catalyzes the reversible isomerization-deamination of glucosamine 6-phosphate (GlcN6P) to form fructose 6-phosphate (Fru6P) and ammonium ion. The chain is Glucosamine-6-phosphate deaminase from Borreliella afzelii (strain PKo) (Borrelia afzelii).